A 59-amino-acid chain; its full sequence is Large ribosomal subunit protein uL30 (59 aa).

The protein belongs to the universal ribosomal protein uL30 family. Part of the 50S ribosomal subunit.

This chain is Large ribosomal subunit protein uL30, found in Syntrophotalea carbinolica (strain DSM 2380 / NBRC 103641 / GraBd1) (Pelobacter carbinolicus).